The primary structure comprises 243 residues: Glucosamine-6-phosphate deaminase (243 aa).

Aspartate 67 (proton acceptor; for enolization step) is an active-site residue. Residue asparagine 137 is the For ring-opening step of the active site. Histidine 139 (proton acceptor; for ring-opening step) is an active-site residue. The active-site For ring-opening step is the glutamate 144.

Belongs to the glucosamine/galactosamine-6-phosphate isomerase family. NagB subfamily.

It catalyses the reaction alpha-D-glucosamine 6-phosphate + H2O = beta-D-fructose 6-phosphate + NH4(+). The protein operates within amino-sugar metabolism; N-acetylneuraminate degradation; D-fructose 6-phosphate from N-acetylneuraminate: step 5/5. Functionally, catalyzes the reversible isomerization-deamination of glucosamine 6-phosphate (GlcN6P) to form fructose 6-phosphate (Fru6P) and ammonium ion. This chain is Glucosamine-6-phosphate deaminase, found in Staphylococcus epidermidis (strain ATCC 12228 / FDA PCI 1200).